We begin with the raw amino-acid sequence, 568 residues long: 2-succinyl-5-enolpyruvyl-6-hydroxy-3-cyclohexene-1-carboxylate synthase (568 aa).

Belongs to the TPP enzyme family. MenD subfamily. Homodimer. It depends on Mg(2+) as a cofactor. Mn(2+) is required as a cofactor. Thiamine diphosphate serves as cofactor.

It catalyses the reaction isochorismate + 2-oxoglutarate + H(+) = 5-enolpyruvoyl-6-hydroxy-2-succinyl-cyclohex-3-ene-1-carboxylate + CO2. It participates in quinol/quinone metabolism; 1,4-dihydroxy-2-naphthoate biosynthesis; 1,4-dihydroxy-2-naphthoate from chorismate: step 2/7. It functions in the pathway quinol/quinone metabolism; menaquinone biosynthesis. Functionally, catalyzes the thiamine diphosphate-dependent decarboxylation of 2-oxoglutarate and the subsequent addition of the resulting succinic semialdehyde-thiamine pyrophosphate anion to isochorismate to yield 2-succinyl-5-enolpyruvyl-6-hydroxy-3-cyclohexene-1-carboxylate (SEPHCHC). The chain is 2-succinyl-5-enolpyruvyl-6-hydroxy-3-cyclohexene-1-carboxylate synthase from Actinobacillus pleuropneumoniae serotype 7 (strain AP76).